Here is an 835-residue protein sequence, read N- to C-terminus: Cap-specific mRNA (nucleoside-2'-O-)-methyltransferase 1 (835 aa).

A disordered region spans residues 1 to 66; the sequence is MKRRNDSECT…TEGKQRSSDS (66 aa). The short motif at 2–19 is the Bipartite nuclear localization signal element; the sequence is KRRNDSECTAPLKKQKKR. 5 positions are modified to phosphoserine: serine 28, serine 31, serine 53, serine 66, and serine 91. A compositionally biased stretch (basic and acidic residues) spans 57 to 66; the sequence is TEGKQRSSDS. The G-patch domain maps to 87 to 133; the sequence is YNSVSQKLMAKMGFKEGEGLGKYSQGRKDIVEASNQKGRRGLGLTLQ. Position 108 is an N6-acetyllysine (lysine 108). Residues 203-207 and arginine 218 each bind substrate; that span reads KSVFD. Residues 231 to 450 enclose the RrmJ-type SAM-dependent 2'-O-MTase domain; sequence FFLNRAAMKM…ERYVVCKGLK (220 aa). Residue asparagine 234 participates in S-adenosyl-L-methionine binding. Lysine 239 is a catalytic residue. Residues 277–283 and 335–336 each bind S-adenosyl-L-methionine; these read CAGPGGF and DI. The active site involves aspartate 364. Residue 374–376 participates in substrate binding; sequence NLQ. Lysine 404 acts as the Proton acceptor in catalysis. A substrate-binding site is contributed by asparagine 439. The interaction with POLR2A stretch occupies residues 727 to 835; sequence SSGTPKLSYT…VLSFIQTHSA (109 aa). One can recognise a WW domain in the interval 752–786; that stretch reads RTVNEPWTMGFSKSFKRKFFYNKKTKNSTFDLPAD.

As to quaternary structure, interacts with POLR2A (via C-terminus).

Its subcellular location is the nucleus. The catalysed reaction is a 5'-end (N(7)-methyl 5'-triphosphoguanosine)-ribonucleoside in mRNA + S-adenosyl-L-methionine = a 5'-end (N(7)-methyl 5'-triphosphoguanosine)-(2'-O-methyl-ribonucleoside) in mRNA + S-adenosyl-L-homocysteine + H(+). Its function is as follows. S-adenosyl-L-methionine-dependent methyltransferase that mediates mRNA cap1 2'-O-ribose methylation to the 5'-cap structure of mRNAs. Methylates the ribose of the first nucleotide of a m(7)GpppG-capped mRNA and small nuclear RNA (snRNA) to produce m(7)GpppRm (cap1). Displays a preference for cap0 transcripts. Cap1 modification is linked to higher levels of translation. May be involved in the interferon response pathway. The protein is Cap-specific mRNA (nucleoside-2'-O-)-methyltransferase 1 (CMTR1) of Bos taurus (Bovine).